Reading from the N-terminus, the 335-residue chain is 3-dehydroquinate synthase (335 aa).

NAD(+)-binding positions include 56-61, 90-94, 114-115, Lys-127, Lys-135, and 153-156; these read DGEKYK, GVITD, TT, and FLKT. 3 residues coordinate Zn(2+): Glu-168, His-227, and His-243.

Belongs to the sugar phosphate cyclases superfamily. Dehydroquinate synthase family. Requires NAD(+) as cofactor. The cofactor is Co(2+). Zn(2+) serves as cofactor.

It is found in the cytoplasm. It carries out the reaction 7-phospho-2-dehydro-3-deoxy-D-arabino-heptonate = 3-dehydroquinate + phosphate. It participates in metabolic intermediate biosynthesis; chorismate biosynthesis; chorismate from D-erythrose 4-phosphate and phosphoenolpyruvate: step 2/7. Its function is as follows. Catalyzes the conversion of 3-deoxy-D-arabino-heptulosonate 7-phosphate (DAHP) to dehydroquinate (DHQ). The polypeptide is 3-dehydroquinate synthase (Pyrococcus furiosus (strain ATCC 43587 / DSM 3638 / JCM 8422 / Vc1)).